Reading from the N-terminus, the 432-residue chain is 5'-deoxyadenosine deaminase (432 aa).

Zn(2+) contacts are provided by histidine 63 and histidine 65. Positions 92 and 184 each coordinate substrate. Residue histidine 211 participates in Zn(2+) binding. Substrate-binding residues include glutamate 214 and aspartate 299. Aspartate 299 serves as a coordination point for Zn(2+).

This sequence belongs to the metallo-dependent hydrolases superfamily. MTA/SAH deaminase family. In terms of assembly, homotetramer. Zn(2+) is required as a cofactor.

It catalyses the reaction 5'-deoxyadenosine + H2O + H(+) = 5'-deoxyinosine + NH4(+). It carries out the reaction S-adenosyl-L-homocysteine + H2O + H(+) = S-inosyl-L-homocysteine + NH4(+). The enzyme catalyses S-methyl-5'-thioadenosine + H2O + H(+) = S-methyl-5'-thioinosine + NH4(+). The catalysed reaction is adenosine + H2O + H(+) = inosine + NH4(+). It functions in the pathway amino-acid biosynthesis; S-adenosyl-L-methionine biosynthesis. Its function is as follows. Catalyzes the deamination of three SAM-derived enzymatic products, namely 5'-deoxyadenosine, S-adenosyl-L-homocysteine, and 5'-methylthioadenosine, to produce the inosine analogs. Can also deaminate adenosine. The preferred substrate for this enzyme is 5'-deoxyadenosine, but all these substrates are efficiently deaminated. Likely functions in a S-adenosyl-L-methionine (SAM) recycling pathway from S-adenosyl-L-homocysteine (SAH) produced from SAM-dependent methylation reactions. May also be involved in the recycling of 5'-deoxyadenosine, whereupon the 5'-deoxyribose moiety of 5'-deoxyinosine is further metabolized to deoxyhexoses used for the biosynthesis of aromatic amino acids in methanogens. This Methanosarcina barkeri (strain Fusaro / DSM 804) protein is 5'-deoxyadenosine deaminase.